The sequence spans 707 residues: Protein kinase C-like 1B (707 aa).

Residues 1–114 (MLFTGTVRVR…KIGSANDIWV (114 aa)) enclose the C2 domain. Phorbol-ester/DAG-type zinc fingers lie at residues 170-220 (GHKF…VWKC) and 248-298 (PHRF…ANNC). The segment at 323-368 (SKKKPSIMTDTSTDISGSSNSENSGYLQQISEDDSGTTSSRSASKV) is disordered. Polar residues predominate over residues 330–365 (MTDTSTDISGSSNSENSGYLQQISEDDSGTTSSRSA). Residues 378–638 (FTFMKVLGKG…EDAIRAHPFF (261 aa)) form the Protein kinase domain. ATP-binding positions include 384–392 (LGKGSFGKV) and Lys-407. Asp-502 functions as the Proton acceptor in the catalytic mechanism. The region spanning 639–707 (REIDWDALES…FSFINPHFTY (69 aa)) is the AGC-kinase C-terminal domain.

Belongs to the protein kinase superfamily. AGC Ser/Thr protein kinase family. PKC subfamily. As to expression, expressed selectively in neurons that receive, transmit and process environmental signals.

The protein resides in the membrane. Its subcellular location is the cytoplasm. It is found in the cytoskeleton. It carries out the reaction L-seryl-[protein] + ATP = O-phospho-L-seryl-[protein] + ADP + H(+). It catalyses the reaction L-threonyl-[protein] + ATP = O-phospho-L-threonyl-[protein] + ADP + H(+). Its function is as follows. PKC is activated by diacylglycerol which in turn phosphorylates a range of cellular proteins. PKC also serves as the receptor for phorbol esters, a class of tumor promoters. Involved in neuropeptide secretion in motor axons. Likely to act via the extracellular signal-regulated kinase/mitogen-activated protein kinase (ERK/MAPK) pathway in the signaling response to various sensory neurons; temperature, odor, taste, and osmolality. Its role in regulation differs depending on the neuron in which it is acting; thermosensation in AFD neurons, osmolality in ASH neurons, olfactory perception in AWA and AWC neurons. Promotes dauer formation mediated by the insulin/IGF pathway. Required for resistance to antimitotic toxins. The sequence is that of Protein kinase C-like 1B from Caenorhabditis elegans.